A 68-amino-acid chain; its full sequence is ATP synthase protein 8 (68 aa).

The helical transmembrane segment at 8–24 (VWPTIIMSMLLALFLLM) threads the bilayer. Lys54 carries the N6-acetyllysine; alternate modification. Lys54 carries the N6-succinyllysine; alternate modification. Residue Lys57 is modified to N6-acetyllysine.

Belongs to the ATPase protein 8 family. In terms of assembly, F-type ATPases have 2 components, CF(1) - the catalytic core - and CF(0) - the membrane proton channel. Component of an ATP synthase complex composed of ATP5PB, ATP5MC1, ATP5F1E, ATP5PD, ATP5ME, ATP5PF, ATP5MF, MT-ATP6, MT-ATP8, ATP5F1A, ATP5F1B, ATP5F1D, ATP5F1C, ATP5PO, ATP5MG, ATP5MK and ATP5MJ. Interacts with PRICKLE3.

It localises to the mitochondrion membrane. Mitochondrial membrane ATP synthase (F(1)F(0) ATP synthase or Complex V) produces ATP from ADP in the presence of a proton gradient across the membrane which is generated by electron transport complexes of the respiratory chain. F-type ATPases consist of two structural domains, F(1) - containing the extramembraneous catalytic core and F(0) - containing the membrane proton channel, linked together by a central stalk and a peripheral stalk. During catalysis, ATP synthesis in the catalytic domain of F(1) is coupled via a rotary mechanism of the central stalk subunits to proton translocation. Part of the complex F(0) domain. Minor subunit located with subunit a in the membrane. The polypeptide is ATP synthase protein 8 (MT-ATP8) (Hylobates lar (Lar gibbon)).